The primary structure comprises 218 residues: MSTKLTWSQWSKKHEIPRKALHTSIGFFALLLQGCGYHAAQIIPVIEIGFIPAFTGDVIRFNWPAFSRLYNRVIGPLMRESEKNAWNGVIFYMIGVWIVLKVFPEEIAVMSVLLLSWCDTTASTVGRKWGKYTPKIAKNKSLAGSLGAFVCGVFCCYVYWGLFRTGPDSLAAQSRIPFPWLCLINGFIGAFAEAMDVWGLDDNLVIPVVSACLLYLIM.

At 1–19 the chain is on the lumenal side; the sequence is MSTKLTWSQWSKKHEIPRK. The helical transmembrane segment at 20 to 37 threads the bilayer; the sequence is ALHTSIGFFALLLQGCGY. His38 is a topological domain (cytoplasmic). A helical transmembrane segment spans residues 39–59; sequence AAQIIPVIEIGFIPAFTGDVI. The Lumenal segment spans residues 60-88; it reads RFNWPAFSRLYNRVIGPLMRESEKNAWNG. A helical membrane pass occupies residues 89-109; that stretch reads VIFYMIGVWIVLKVFPEEIAV. Topologically, residues 110-142 are cytoplasmic; that stretch reads MSVLLLSWCDTTASTVGRKWGKYTPKIAKNKSL. Residues 143 to 163 form a helical membrane-spanning segment; sequence AGSLGAFVCGVFCCYVYWGLF. The Lumenal segment spans residues 164-179; sequence RTGPDSLAAQSRIPFP. The next 2 helical transmembrane spans lie at 180 to 200 and 201 to 217; these read WLCLINGFIGAFAEAMDVWGL and DDNLVIPVVSACLLYLI. A topological domain (lumenal) is located at residue Met218.

It belongs to the DGK1 family. It depends on Ca(2+) as a cofactor. Requires Mg(2+) as cofactor.

The protein resides in the endoplasmic reticulum membrane. Its subcellular location is the nucleus membrane. It carries out the reaction a 1,2-diacyl-sn-glycerol + CTP = a 1,2-diacyl-sn-glycero-3-phosphate + CDP + H(+). Its function is as follows. CTP-dependent diacylglycerol kinase that catalyzes the phosphorylation of diacylglycerol (DAG) to phosphatidate (PA). Controls phosphatidate levels at the nuclear envelope. Counteracts the activity of PA phosphatase ned1. May be involved in vesicle trafficking between the endoplasmic reticulum and the Golgi apparatus. Involved in pre-tRNA splicing. The polypeptide is CTP-dependent diacylglycerol kinase 1 (ptp4) (Schizosaccharomyces pombe (strain 972 / ATCC 24843) (Fission yeast)).